Reading from the N-terminus, the 181-residue chain is Ribulose bisphosphate carboxylase small subunit, chloroplastic 1 (181 aa).

The transit peptide at 1–57 (MASSIVSSAAAATRSNVAQASMVAPFTGLKSAASFPVTKKNNNVDITSLASNGGRVR) directs the protein to the chloroplast.

It belongs to the RuBisCO small chain family. (Microbial infection) Binds to tobamovirus movement protein; this interaction seems required for viral systemic movement. As to quaternary structure, heterohexadecamer of 8 large and 8 small subunits.

Its subcellular location is the plastid. The protein resides in the chloroplast. The protein localises to the cell junction. It localises to the plasmodesma. Functionally, ruBisCO catalyzes two reactions: the carboxylation of D-ribulose 1,5-bisphosphate, the primary event in carbon dioxide fixation, as well as the oxidative fragmentation of the pentose substrate. Both reactions occur simultaneously and in competition at the same active site. Although the small subunit is not catalytic it is essential for maximal activity. Involved in antiviral defenses. This chain is Ribulose bisphosphate carboxylase small subunit, chloroplastic 1, found in Solanum lycopersicum (Tomato).